A 257-amino-acid chain; its full sequence is Phosphonates import ATP-binding protein PhnC (257 aa).

An ABC transporter domain is found at 2 to 246 (IEFRNVSKVY…KFAEIYGDVA (245 aa)). 35–42 (GLSGAGKS) is a binding site for ATP.

This sequence belongs to the ABC transporter superfamily. Phosphonates importer (TC 3.A.1.9.1) family. As to quaternary structure, the complex is composed of two ATP-binding proteins (PhnC), two transmembrane proteins (PhnE) and a solute-binding protein (PhnD).

The protein resides in the cell membrane. It carries out the reaction phosphonate(out) + ATP + H2O = phosphonate(in) + ADP + phosphate + H(+). Part of the ABC transporter complex PhnCDE involved in phosphonates import. Responsible for energy coupling to the transport system. In Bacillus cereus (strain ATCC 10987 / NRS 248), this protein is Phosphonates import ATP-binding protein PhnC.